The sequence spans 62 residues: uncharacterized protein (62 aa).

The chain crosses the membrane as a helical span at residues 17–37; that stretch reads IVFFLGLVVVLLMMINLYMLI.

The protein resides in the membrane. This is an uncharacterized protein from Helicobacter pylori (strain J99 / ATCC 700824) (Campylobacter pylori J99).